A 540-amino-acid chain; its full sequence is Pentatricopeptide repeat-containing protein At1g14470 (540 aa).

14 PPR repeats span residues 70-104, 105-134, 135-165, 166-196, 197-227, 228-262, 263-297, 298-328, 330-364, 365-395, 397-431, 432-462, 463-497, and 498-528; these read NVFV…GIMP, DAFS…GFFK, DPYV…ISQR, KGSD…MPEN, DVVS…MPEK, SVVS…GVRP, NETT…RVRL, NCFV…LGTQ, NLVT…NVVS, WNSL…GDSK, DEVT…QIKL, NDSG…MKER, DVVS…GIEP, and DRVT…IRNP.

It belongs to the PPR family. PCMP-A subfamily.

The protein is Pentatricopeptide repeat-containing protein At1g14470 (PCMP-A4) of Arabidopsis thaliana (Mouse-ear cress).